The chain runs to 134 residues: Mediator of RNA polymerase II transcription subunit 10 (134 aa).

This sequence belongs to the Mediator complex subunit 10 family. As to quaternary structure, component of the Mediator complex.

It localises to the nucleus. In terms of biological role, component of the Mediator complex, a coactivator involved in the regulated transcription of nearly all RNA polymerase II-dependent genes. Mediator functions as a bridge to convey information from gene-specific regulatory proteins to the basal RNA polymerase II transcription machinery. Mediator is recruited to promoters by direct interactions with regulatory proteins and serves as a scaffold for the assembly of a functional preinitiation complex with RNA polymerase II and the general transcription factors. Negatively regulates the Wnt signaling pathway and positively regulates the Nodal signaling pathway. Required for cardiac cushion formation. In Danio rerio (Zebrafish), this protein is Mediator of RNA polymerase II transcription subunit 10 (med10).